The sequence spans 425 residues: Type I restriction enzyme MjaVIII specificity subunit (425 aa).

It belongs to the type-I restriction system S methylase family. The type I restriction/modification system is composed of three polypeptides R, M and S.

In terms of biological role, the specificity (S) subunit of a type I restriction enzyme; this subunit dictates DNA sequence specificity. The M and S subunits together form a methyltransferase (MTase) that methylates A-2 on the top and A-3 on the bottom strand of the sequence 5'-GAYN(5)GTAA-3'. In the presence of the R subunit the complex can also act as an endonuclease, binding to the same target sequence but cutting the DNA some distance from this site. Whether the DNA is cut or modified depends on the methylation state of the target sequence. When the target site is unmodified, the DNA is cut. When the target site is hemimethylated, the complex acts as a maintenance MTase modifying the DNA so that both strands become methylated. After locating a non-methylated recognition site, the enzyme complex serves as a molecular motor that translocates DNA in an ATP-dependent manner until a collision occurs that triggers cleavage. This chain is Type I restriction enzyme MjaVIII specificity subunit, found in Methanocaldococcus jannaschii (strain ATCC 43067 / DSM 2661 / JAL-1 / JCM 10045 / NBRC 100440) (Methanococcus jannaschii).